We begin with the raw amino-acid sequence, 446 residues long: Exodeoxyribonuclease 7 large subunit (446 aa).

The protein belongs to the XseA family. Heterooligomer composed of large and small subunits.

It localises to the cytoplasm. It carries out the reaction Exonucleolytic cleavage in either 5'- to 3'- or 3'- to 5'-direction to yield nucleoside 5'-phosphates.. In terms of biological role, bidirectionally degrades single-stranded DNA into large acid-insoluble oligonucleotides, which are then degraded further into small acid-soluble oligonucleotides. In Streptococcus agalactiae serotype III (strain NEM316), this protein is Exodeoxyribonuclease 7 large subunit.